The primary structure comprises 93 residues: Vacuolar ATPase assembly integral membrane protein VMA21 (93 aa).

Over Met-1–Ala-21 the chain is Cytoplasmic. Residues Val-22 to Phe-42 traverse the membrane as a helical segment. The Lumenal portion of the chain corresponds to Ser-43–Thr-54. The helical transmembrane segment at Phe-55–Ala-75 threads the bilayer. Residues Phe-76–Ser-93 are Cytoplasmic-facing. Residues Lys-90–Ser-93 carry the Prevents secretion from ER motif.

Belongs to the VMA21 family.

The protein resides in the endoplasmic reticulum membrane. It is found in the endoplasmic reticulum-Golgi intermediate compartment membrane. Its subcellular location is the cytoplasmic vesicle. It localises to the COPII-coated vesicle membrane. Its function is as follows. Required for the assembly of the V0 complex of the vacuolar ATPase (V-ATPase) in the endoplasmic reticulum. This Cryptococcus neoformans var. neoformans serotype D (strain JEC21 / ATCC MYA-565) (Filobasidiella neoformans) protein is Vacuolar ATPase assembly integral membrane protein VMA21.